The primary structure comprises 441 residues: Ribosomal protein uS12 methylthiotransferase RimO (441 aa).

An MTTase N-terminal domain is found at 8–118 (PKIGFVSLGC…VLEHVHHYVP (111 aa)). Positions 17, 53, 82, 150, 154, and 157 each coordinate [4Fe-4S] cluster. Residues 136–373 (LTPRHYAYLK…MQLQQQISAE (238 aa)) enclose the Radical SAM core domain. The TRAM domain occupies 376 to 441 (QEKVGREILV…DEYDLWGSRV (66 aa)).

This sequence belongs to the methylthiotransferase family. RimO subfamily. It depends on [4Fe-4S] cluster as a cofactor.

The protein localises to the cytoplasm. The enzyme catalyses L-aspartate(89)-[ribosomal protein uS12]-hydrogen + (sulfur carrier)-SH + AH2 + 2 S-adenosyl-L-methionine = 3-methylsulfanyl-L-aspartate(89)-[ribosomal protein uS12]-hydrogen + (sulfur carrier)-H + 5'-deoxyadenosine + L-methionine + A + S-adenosyl-L-homocysteine + 2 H(+). Functionally, catalyzes the methylthiolation of an aspartic acid residue of ribosomal protein uS12. This Shigella boydii serotype 18 (strain CDC 3083-94 / BS512) protein is Ribosomal protein uS12 methylthiotransferase RimO.